A 52-amino-acid chain; its full sequence is Ribosome modulation factor (52 aa).

The protein belongs to the ribosome modulation factor family.

The protein localises to the cytoplasm. Functionally, during stationary phase, converts 70S ribosomes to an inactive dimeric form (100S ribosomes). This is Ribosome modulation factor from Xenorhabdus nematophila (strain ATCC 19061 / DSM 3370 / CCUG 14189 / LMG 1036 / NCIMB 9965 / AN6).